A 189-amino-acid chain; its full sequence is MFWLLAILAYLLGSLSFAILLSRLTGNPDPRMSGSGNAGATNMLRLAGRKLAILTLLGDLCKGLLPVLIASAMGLSLQDQAWIGVCAVIGHLFPLYFRFRGGKGVATAAGMLLGLYPPAALLAVCAWLLTFYLTRTSSLAALIATPLTLPLLAWQEPAALLPMSTLTLLIVWRHRGNLRDLFAGRERHF.

5 helical membrane-spanning segments follow: residues 1–21, 51–71, 77–97, 111–131, and 151–171; these read MFWL…AILL, LAIL…LIAS, LQDQ…PLYF, MLLG…LLTF, and LLAW…LLIV.

It belongs to the PlsY family. As to quaternary structure, probably interacts with PlsX.

It is found in the cell inner membrane. It carries out the reaction an acyl phosphate + sn-glycerol 3-phosphate = a 1-acyl-sn-glycero-3-phosphate + phosphate. It participates in lipid metabolism; phospholipid metabolism. Its function is as follows. Catalyzes the transfer of an acyl group from acyl-phosphate (acyl-PO(4)) to glycerol-3-phosphate (G3P) to form lysophosphatidic acid (LPA). This enzyme utilizes acyl-phosphate as fatty acyl donor, but not acyl-CoA or acyl-ACP. The sequence is that of Glycerol-3-phosphate acyltransferase from Pseudomonas fluorescens (strain Pf0-1).